The following is a 416-amino-acid chain: Vacuole membrane protein KMS1 (416 aa).

N-acetylglycine is present on Gly-2. Residues 2–60 (GSAGVASSSSDVAISALREKHEKEVENLTLTTQPLNTLKLFVEATIQYIKRSISYLLAH) lie on the Cytoplasmic side of the membrane. Residues 61 to 81 (GGWFILITTLLVVSGGLLVTV) form a helical membrane-spanning segment. Residues 82–101 (DGPHGKHVEEVLEYVRYGLW) are Lumenal-facing. A helical transmembrane segment spans residues 102 to 124 (WIALGVASSIGLGSGLHTFVLYL). Residues 125–257 (GPHIALFTLK…WLLTHSQHLN (133 aa)) are Cytoplasmic-facing. Residues 258-278 (FFTVLVLASVPNPLFDLAGIM) traverse the membrane as a helical segment. The Lumenal portion of the chain corresponds to 279 to 289 (CGQFGIPFWEF). The helical transmembrane segment at 290-312 (FLATLIGKAIIKTHIQTIFIICV) threads the bilayer. The Cytoplasmic portion of the chain corresponds to 313-323 (CNNQLLDWMEN). A helical transmembrane segment spans residues 324–344 (ELIWILSHVPGLASMLPGLTA). Residues 345–372 (KLHAMKEKYIDAPSPVPSHIKVKKWDFS) are Lumenal-facing. A helical membrane pass occupies residues 373 to 393 (FASIWNGIVWLMLLNFFVKIV). At 394 to 416 (TATAQRHLKKKQEKEMATLTHSD) the chain is on the cytoplasmic side.

It belongs to the VMP1 family.

The protein resides in the endoplasmic reticulum membrane. In terms of biological role, involved in the early secretory pathway. Required for the correct export of secretory products from the endoplasmic reticulum (ER) and involved in the maintenance of ER integrity. This is Vacuole membrane protein KMS1 from Arabidopsis thaliana (Mouse-ear cress).